The chain runs to 164 residues: 3-isopropylmalate dehydratase small subunit 1 (164 aa).

This sequence belongs to the LeuD family. LeuD type 2 subfamily. In terms of assembly, heterodimer of LeuC and LeuD.

The catalysed reaction is (2R,3S)-3-isopropylmalate = (2S)-2-isopropylmalate. Its pathway is amino-acid biosynthesis; L-leucine biosynthesis; L-leucine from 3-methyl-2-oxobutanoate: step 2/4. In terms of biological role, catalyzes the isomerization between 2-isopropylmalate and 3-isopropylmalate, via the formation of 2-isopropylmaleate. The chain is 3-isopropylmalate dehydratase small subunit 1 (leuD1) from Pyrococcus furiosus (strain ATCC 43587 / DSM 3638 / JCM 8422 / Vc1).